The sequence spans 290 residues: Phosphatidylglycerol--prolipoprotein diacylglyceryl transferase (290 aa).

Transmembrane regions (helical) follow at residues 21-41 (VSLH…MWLA), 60-80 (LLYA…VLFY), 96-116 (WDGG…MLWF), 124-144 (FFQV…AGRL), 199-219 (SQLY…NVFI), 226-246 (GSVS…VECF), and 260-280 (ISMG…MMIW). Residue Arg143 coordinates a 1,2-diacyl-sn-glycero-3-phospho-(1'-sn-glycerol).

Belongs to the Lgt family.

The protein localises to the cell inner membrane. It carries out the reaction L-cysteinyl-[prolipoprotein] + a 1,2-diacyl-sn-glycero-3-phospho-(1'-sn-glycerol) = an S-1,2-diacyl-sn-glyceryl-L-cysteinyl-[prolipoprotein] + sn-glycerol 1-phosphate + H(+). It participates in protein modification; lipoprotein biosynthesis (diacylglyceryl transfer). Functionally, catalyzes the transfer of the diacylglyceryl group from phosphatidylglycerol to the sulfhydryl group of the N-terminal cysteine of a prolipoprotein, the first step in the formation of mature lipoproteins. This Yersinia pseudotuberculosis serotype O:1b (strain IP 31758) protein is Phosphatidylglycerol--prolipoprotein diacylglyceryl transferase.